The primary structure comprises 352 residues: CD5 antigen-like (352 aa).

An N-terminal signal peptide occupies residues 1–21; sequence MAPLFNLMLAILSIFVGSCFS. 3 SRCR domains span residues 27–128, 141–241, and 246–348; these read VQLV…AQCE, VRLV…MECE, and LKLV…VICT. Cystine bridges form between Cys-36–Cys-70, Cys-52–Cys-117, Cys-65–Cys-127, Cys-98–Cys-108, Cys-166–Cys-230, Cys-179–Cys-240, Cys-211–Cys-221, Cys-255–Cys-289, Cys-271–Cys-337, Cys-284–Cys-347, and Cys-317–Cys-327. The N-linked (GlcNAc...) asparagine glycan is linked to Asn-99. N-linked (GlcNAc...) asparagine glycosylation is present at Asn-229.

In terms of assembly, interacts with FASN; the interaction is direct. Interacts (via SRCR2 and SRCR3) with pentameric IgM (via Fc region); disulfide-linked. Post-translationally, N-glycosylated. N-glycan at Asn-99 possesses only alpha2,6-sialylated terminals, while Asn-229 possesses both alpha2,6-sialylated and non-sialylated terminals. N-glycosylation increases secretion. Specifically expressed in tissue macrophages. Expressed in thymus, liver, spleen and lymph nodes. Present in Th17 cells; mainly present in non-pathogenic Th17 cells.

Its subcellular location is the secreted. It localises to the cytoplasm. Functionally, secreted protein that acts as a key regulator of lipid synthesis: mainly expressed by macrophages in lymphoid and inflamed tissues and regulates mechanisms in inflammatory responses, such as infection or atherosclerosis. Able to inhibit lipid droplet size in adipocytes. Following incorporation into mature adipocytes via CD36-mediated endocytosis, associates with cytosolic FASN, inhibiting fatty acid synthase activity and leading to lipolysis, the degradation of triacylglycerols into glycerol and free fatty acids (FFA). CD5L-induced lipolysis occurs with progression of obesity: participates in obesity-associated inflammation following recruitment of inflammatory macrophages into adipose tissues, a cause of insulin resistance and obesity-related metabolic disease. Regulation of intracellular lipids mediated by CD5L has a direct effect on transcription regulation mediated by nuclear receptors ROR-gamma (RORC). Acts as a key regulator of metabolic switch in T-helper Th17 cells. Regulates the expression of pro-inflammatory genes in Th17 cells by altering the lipid content and limiting synthesis of cholesterol ligand of RORC, the master transcription factor of Th17-cell differentiation. CD5L is mainly present in non-pathogenic Th17 cells, where it decreases the content of polyunsaturated fatty acyls (PUFA), affecting two metabolic proteins MSMO1 and CYP51A1, which synthesize ligands of RORC, limiting RORC activity and expression of pro-inflammatory genes. Participates in obesity-associated autoimmunity via its association with IgM, interfering with the binding of IgM to Fcalpha/mu receptor and enhancing the development of long-lived plasma cells that produce high-affinity IgG autoantibodies. Also acts as an inhibitor of apoptosis in macrophages: promotes macrophage survival from the apoptotic effects of oxidized lipids in case of atherosclerosis. Involved in early response to microbial infection against various pathogens by acting as a pattern recognition receptor and by promoting autophagy. The protein is CD5 antigen-like (Cd5l) of Mus musculus (Mouse).